A 136-amino-acid chain; its full sequence is Class I hydrophobin A (136 aa).

Positions 1-16 (MRFALAITTLIAAVTA) are cleaved as a signal peptide. Cystine bridges form between C39-C109, C47-C103, C48-C85, and C110-C128.

It belongs to the fungal hydrophobin family. As to expression, expressed in aerial conidia, in vitro blastospores, submerged conidia, and cells sporulating on chitin and insect cuticle, with hyd1 expression peaking in growing mycelia.

Its subcellular location is the secreted. It is found in the cell wall. It localises to the spore coat. The protein localises to the vacuole. The protein resides in the cytoplasmic vesicle. Its function is as follows. Aerial growth, conidiation, and dispersal of filamentous fungi in the environment rely upon a capability of their secreting small amphipathic proteins called hydrophobins (HPBs) with low sequence identity. Class I can self-assemble into an outermost layer of rodlet bundles on aerial cell surfaces, conferring cellular hydrophobicity that supports fungal growth, development and dispersal; whereas Class II form highly ordered films at water-air interfaces through intermolecular interactions but contribute nothing to the rodlet structure. Hyd1A contributes to certain cell wall-related features, such as hydrophobicity but is not involved in cell wall-related events during fungal proliferation in host hemocoel. Hyd1A and hyd1B coregulate the formation, morphology and orderly assembly of rodlet bundles required for conidial hydrophobicity and infectivity. Contributes to the spore coat rodlet layer. In Beauveria bassiana (strain ARSEF 2860) (White muscardine disease fungus), this protein is Class I hydrophobin A.